We begin with the raw amino-acid sequence, 305 residues long: Sulfate adenylyltransferase subunit 2 (305 aa).

This sequence belongs to the PAPS reductase family. CysD subfamily. In terms of assembly, heterodimer composed of CysD, the smaller subunit, and CysN.

The enzyme catalyses sulfate + ATP + H(+) = adenosine 5'-phosphosulfate + diphosphate. It functions in the pathway sulfur metabolism; hydrogen sulfide biosynthesis; sulfite from sulfate: step 1/3. With CysN forms the ATP sulfurylase (ATPS) that catalyzes the adenylation of sulfate producing adenosine 5'-phosphosulfate (APS) and diphosphate, the first enzymatic step in sulfur assimilation pathway. APS synthesis involves the formation of a high-energy phosphoric-sulfuric acid anhydride bond driven by GTP hydrolysis by CysN coupled to ATP hydrolysis by CysD. This Pseudomonas fluorescens (strain Pf0-1) protein is Sulfate adenylyltransferase subunit 2.